Reading from the N-terminus, the 540-residue chain is Patellin-4 (540 aa).

S53 bears the Phosphoserine mark. The stretch at 61–183 (FADLKESEKK…EKKTEDVVTE (123 aa)) forms a coiled coil. The tract at residues 89–140 (LKTKKKESSPMKEKKEEVVKPEAEVEKKKEEAAEEKVEEEKKSEAVVTEEAP) is disordered. Over residues 94–140 (KESSPMKEKKEEVVKPEAEVEKKKEEAAEEKVEEEKKSEAVVTEEAP) the composition is skewed to basic and acidic residues. A Glycyl lysine isopeptide (Lys-Gly) (interchain with G-Cter in ubiquitin) cross-link involves residue K249. Residues 258-428 (GEEFGEDLAT…QYGGFKTVDD (171 aa)) enclose the CRAL-TRIO domain. One can recognise a GOLD domain in the interval 433-534 (NETVSEVVVK…KKKVLYRYRT (102 aa)).

The protein belongs to the patellin family.

The protein resides in the membrane. Its subcellular location is the cytoplasm. Carrier protein that may be involved in membrane-trafficking events associated with cell plate formation during cytokinesis. Binds to some hydrophobic molecules such as phosphoinositides and promotes their transfer between the different cellular sites. In Arabidopsis thaliana (Mouse-ear cress), this protein is Patellin-4 (PATL4).